We begin with the raw amino-acid sequence, 258 residues long: Peptide methionine sulfoxide reductase A4, chloroplastic (258 aa).

The transit peptide at 1-53 (MQVLVVSPPLIAAASLSKPLNSLSKAALSFSRAKPICPFPQTSRRPISVYKSP) directs the protein to the chloroplast. Met-54 bears the N-acetylmethionine mark. Residues 62–89 (GFGSRPQAQADPSSAAIAQGPDDDVPSS) are disordered. Ser-245 is modified (phosphoserine).

This sequence belongs to the MsrA Met sulfoxide reductase family. As to expression, expressed in rosette and cauline leaves, and at lower levels in stems and flowers (at protein level).

It localises to the plastid. The protein resides in the chloroplast stroma. The catalysed reaction is L-methionyl-[protein] + [thioredoxin]-disulfide + H2O = L-methionyl-(S)-S-oxide-[protein] + [thioredoxin]-dithiol. It catalyses the reaction [thioredoxin]-disulfide + L-methionine + H2O = L-methionine (S)-S-oxide + [thioredoxin]-dithiol. In terms of biological role, catalyzes the reduction of methionine sulfoxide (MetSO) to methionine in proteins. Plays a protective role against oxidative stress by restoring activity to proteins that have been inactivated by methionine oxidation. Prevents the methionine sulfoxidation of the heat shock protein HSP21 and its subsequent inactivation. MSRA family specifically reduces the MetSO S-enantiomer. In Arabidopsis thaliana (Mouse-ear cress), this protein is Peptide methionine sulfoxide reductase A4, chloroplastic (MSR4).